The following is a 770-amino-acid chain: Elongation factor G, mitochondrial (770 aa).

The transit peptide at 1-24 directs the protein to the mitochondrion; the sequence is MLKLSFRSLTSRLPRLSTLVVRGY. Residues 57-353 form the tr-type G domain; it reads KQIRNIGISA…AVCDYLPNPS (297 aa). GTP is bound by residues 66 to 73, 151 to 155, and 205 to 208; these read AHIDSGKT, DTPGH, and NKMD.

This sequence belongs to the TRAFAC class translation factor GTPase superfamily. Classic translation factor GTPase family. EF-G/EF-2 subfamily.

Its subcellular location is the mitochondrion. The protein operates within protein biosynthesis; polypeptide chain elongation. In terms of biological role, mitochondrial GTPase that catalyzes the GTP-dependent ribosomal translocation step during translation elongation. During this step, the ribosome changes from the pre-translocational (PRE) to the post-translocational (POST) state as the newly formed A-site-bound peptidyl-tRNA and P-site-bound deacylated tRNA move to the P and E sites, respectively. Catalyzes the coordinated movement of the two tRNA molecules, the mRNA and conformational changes in the ribosome. This Schizosaccharomyces pombe (strain 972 / ATCC 24843) (Fission yeast) protein is Elongation factor G, mitochondrial (mef1).